The sequence spans 211 residues: Ribosomal RNA small subunit methyltransferase G (211 aa).

Residues G73, 126 to 127, and R142 each bind S-adenosyl-L-methionine; that span reads IE.

Belongs to the methyltransferase superfamily. RNA methyltransferase RsmG family.

The protein resides in the cytoplasm. It carries out the reaction guanosine(527) in 16S rRNA + S-adenosyl-L-methionine = N(7)-methylguanosine(527) in 16S rRNA + S-adenosyl-L-homocysteine. In terms of biological role, specifically methylates the N7 position of guanine in position 527 of 16S rRNA. This chain is Ribosomal RNA small subunit methyltransferase G, found in Methylorubrum extorquens (strain PA1) (Methylobacterium extorquens).